Reading from the N-terminus, the 213-residue chain is Adenylate kinase (213 aa).

ATP is bound at residue 10-15 (GAGKGT). The interval 30 to 59 (STGDMFRAAMANQTEMGLLAKSYIDKGDLV) is NMP. AMP is bound by residues threonine 31, arginine 36, 57-59 (DLV), 86-89 (GYPR), and glutamine 93. The segment at 127–160 (GRIIHKKTGETFHKIFNPPAGDYDENDYYQREDD) is LID. ATP is bound by residues arginine 128 and 137–138 (TF). The AMP site is built by arginine 157 and arginine 168. Glutamine 196 contributes to the ATP binding site.

The protein belongs to the adenylate kinase family. Monomer.

The protein resides in the cytoplasm. The enzyme catalyses AMP + ATP = 2 ADP. It participates in purine metabolism; AMP biosynthesis via salvage pathway; AMP from ADP: step 1/1. Functionally, catalyzes the reversible transfer of the terminal phosphate group between ATP and AMP. Plays an important role in cellular energy homeostasis and in adenine nucleotide metabolism. This chain is Adenylate kinase, found in Streptococcus uberis (strain ATCC BAA-854 / 0140J).